The chain runs to 228 residues: Sodium channel regulatory subunit beta-4 (228 aa).

A signal peptide spans 1–30; sequence MPGAGDGGKAPARWLGTGLLGLFLLPVTLS. The 118-residue stretch at 31 to 148 folds into the Ig-like C2-type domain; sequence LEVSVGKATD…NNLQHHATIF (118 aa). Topologically, residues 31–162 are extracellular; the sequence is LEVSVGKATD…DRLEEVDNTV (132 aa). Residues Asn-45, Asn-71, and Asn-113 are each glycosylated (N-linked (GlcNAc...) asparagine). The cysteines at positions 53 and 131 are disulfide-linked. The chain crosses the membrane as a helical span at residues 163–183; that stretch reads TLIILAVVGGVIGLLILILLI. The Cytoplasmic portion of the chain corresponds to 184–228; the sequence is KKLIIFILKKTREKKKECLVSSSGNDNTENGLPGSKAEEKPPSKV. The segment at 200–228 is disordered; that stretch reads ECLVSSSGNDNTENGLPGSKAEEKPPSKV. Residues 203–213 show a composition bias toward polar residues; it reads VSSSGNDNTEN. Residues 219–228 are compositionally biased toward basic and acidic residues; it reads KAEEKPPSKV.

This sequence belongs to the sodium channel auxiliary subunit SCN4B (TC 8.A.17) family. As to quaternary structure, a voltage-gated sodium (Nav) channel consists of an ion-conducting pore-forming alpha subunit functional on its own that is regulated by one or more beta subunits. The beta subunit SCN4B is disulfide-linked to the pore-forming alpha subunit. Interacts with SCN1A; regulatory subunit of SCN1A/Nav1.1. Interacts with SCN2A; regulatory subunit of SCN2A/Nav1.2. Post-translationally, contains an interchain disulfide bond with SCN2A. In terms of processing, N-glycosylated. As to expression, expressed at a high level in dorsal root ganglia, at a lower level in brain, spinal cord, skeletal muscle and heart. Expressed in the atrium.

It is found in the cell membrane. Functionally, regulatory subunit of multiple voltage-gated sodium (Nav) channels directly mediating the depolarization of excitable membranes. Navs, also called VGSCs (voltage-gated sodium channels) or VDSCs (voltage-dependent sodium channels), operate by switching between closed and open conformations depending on the voltage difference across the membrane. In the open conformation they allow Na(+) ions to selectively pass through the pore, along their electrochemical gradient. The influx of Na+ ions provokes membrane depolarization, initiating the propagation of electrical signals throughout cells and tissues. The accessory beta subunits participate in localization and functional modulation of the Nav channels. Modulates the activity of SCN1A/Nav1.1. Modulates the activity of SCN2A/Nav1.2. The protein is Sodium channel regulatory subunit beta-4 of Homo sapiens (Human).